The primary structure comprises 189 residues: Notch ligand osm-11 (189 aa).

Positions 1-18 (MNFITVAALAIVMVLAQA) are cleaved as a signal peptide.

As to quaternary structure, may interact with lin-12/Notch receptor. As to expression, expressed in coelomocytes (at protein level).

The protein resides in the apical cell membrane. In terms of biological role, probable secreted lin-12/Notch ligand or co-ligand involved in the mediation of Notch signaling. Involved in the lin-12/Notch pathway signaling of cell fate in vulval precursor cells (VPCs), acting redundantly with dsl-1 and lag-2. Required for normal octanol avoidance response, acting via both lin-12/Notch and glp-1/Notch signaling pathways in neurons, in concert with lag-2. Involved in regulation of sleep-like quiescence during the larval to adult transition, acting via Notch receptor activation and in parallel with EGF signaling. This Caenorhabditis elegans protein is Notch ligand osm-11.